The sequence spans 142 residues: Large ribosomal subunit protein uL11 (142 aa).

It belongs to the universal ribosomal protein uL11 family. As to quaternary structure, part of the ribosomal stalk of the 50S ribosomal subunit. Interacts with L10 and the large rRNA to form the base of the stalk. L10 forms an elongated spine to which L12 dimers bind in a sequential fashion forming a multimeric L10(L12)X complex. One or more lysine residues are methylated.

Forms part of the ribosomal stalk which helps the ribosome interact with GTP-bound translation factors. This Shewanella sediminis (strain HAW-EB3) protein is Large ribosomal subunit protein uL11.